We begin with the raw amino-acid sequence, 377 residues long: NIF3-like protein 1 (377 aa).

Residue lysine 109 is modified to N6-acetyllysine. The interval 244–377 (LLLYTGMGRL…ETDRDPLHVI (134 aa)) is mediates interaction with COPS2. At threonine 255 the chain carries Phosphothreonine. The residue at position 259 (serine 259) is a Phosphoserine.

It belongs to the GTP cyclohydrolase I type 2/NIF3 family. In terms of assembly, homodimer. Interacts with COPS2. Interacts with THOC7.

It localises to the cytoplasm. It is found in the nucleus. Functionally, may function as a transcriptional corepressor through its interaction with COPS2, negatively regulating the expression of genes involved in neuronal differentiation. This is NIF3-like protein 1 from Bos taurus (Bovine).